A 623-amino-acid polypeptide reads, in one-letter code: Phosphoenolpyruvate carboxykinase [GTP] (623 aa).

Residues arginine 86 and 220–222 contribute to the substrate site; that span reads YGG. 2 residues coordinate Mn(2+): lysine 229 and histidine 248. Serine 270 is a binding site for substrate. Residue 271 to 276 participates in GTP binding; it reads MCGKTS. The active site involves cysteine 272. Aspartate 289 provides a ligand contact to Mn(2+). 384-386 contacts substrate; the sequence is NAR. The GTP site is built by arginine 386 and arginine 418.

It belongs to the phosphoenolpyruvate carboxykinase [GTP] family. In terms of assembly, homotetramer. It depends on Mn(2+) as a cofactor.

It is found in the cytoplasm. The enzyme catalyses oxaloacetate + GTP = phosphoenolpyruvate + GDP + CO2. The protein operates within carbohydrate biosynthesis; gluconeogenesis. Its function is as follows. Involved in the gluconeogenesis. Catalyzes the conversion of oxaloacetate (OAA) to phosphoenolpyruvate (PEP), the rate-limiting step in the metabolic pathway that produces glucose from lactate and other precursors derived from the citric acid cycle. This is Phosphoenolpyruvate carboxykinase [GTP] (pckG) from Thermococcus kodakarensis (strain ATCC BAA-918 / JCM 12380 / KOD1) (Pyrococcus kodakaraensis (strain KOD1)).